Consider the following 382-residue polypeptide: D-alanine--D-alanine ligase (382 aa).

Residues 161-372 (KVVFEAAGLQ…YAELIDELIY (212 aa)) enclose the ATP-grasp domain. Residue 193–248 (VDRLGYPVFVKPARAGSSMGISKVDSLEGLDAAIAAAREHDLKLVIEAGIVGREIE) participates in ATP binding. Mg(2+)-binding residues include D326, E339, and N341.

The protein belongs to the D-alanine--D-alanine ligase family. The cofactor is Mg(2+). It depends on Mn(2+) as a cofactor.

Its subcellular location is the cytoplasm. It catalyses the reaction 2 D-alanine + ATP = D-alanyl-D-alanine + ADP + phosphate + H(+). Its pathway is cell wall biogenesis; peptidoglycan biosynthesis. Cell wall formation. This is D-alanine--D-alanine ligase from Arthrobacter sp. (strain FB24).